A 139-amino-acid polypeptide reads, in one-letter code: Flagellar assembly factor FliW 2 (139 aa).

It belongs to the FliW family. In terms of assembly, interacts with translational regulator CsrA and flagellin(s).

It is found in the cytoplasm. Functionally, acts as an anti-CsrA protein, binds CsrA and prevents it from repressing translation of its target genes, one of which is flagellin. Binds to flagellin and participates in the assembly of the flagellum. The polypeptide is Flagellar assembly factor FliW 2 (Helicobacter hepaticus (strain ATCC 51449 / 3B1)).